The following is a 444-amino-acid chain: ATP-dependent protease ATPase subunit HslU (444 aa).

ATP is bound by residues Ile-20 and 62 to 67; that span reads GVGKTE. The segment at 130 to 158 is disordered; that stretch reads EDRILDALVPPPRGASGEPERGEDNSARQ. Residues Asp-257, Glu-322, and Arg-394 each contribute to the ATP site.

This sequence belongs to the ClpX chaperone family. HslU subfamily. In terms of assembly, a double ring-shaped homohexamer of HslV is capped on each side by a ring-shaped HslU homohexamer. The assembly of the HslU/HslV complex is dependent on binding of ATP.

The protein localises to the cytoplasm. ATPase subunit of a proteasome-like degradation complex; this subunit has chaperone activity. The binding of ATP and its subsequent hydrolysis by HslU are essential for unfolding of protein substrates subsequently hydrolyzed by HslV. HslU recognizes the N-terminal part of its protein substrates and unfolds these before they are guided to HslV for hydrolysis. This is ATP-dependent protease ATPase subunit HslU from Bordetella parapertussis (strain 12822 / ATCC BAA-587 / NCTC 13253).